Reading from the N-terminus, the 118-residue chain is MNNKEIGKLGEDFTIDFLNKRGFIILERNYKVPLGEVDIIAQKGDLLIFIEVKTRRNLDFGIPAEAVDRTKQTRIKKIAELYISTKKPKFKKIRFDIMSIILSKSGKILDWEYLINAF.

Belongs to the UPF0102 family.

The chain is UPF0102 protein DICTH_1420 from Dictyoglomus thermophilum (strain ATCC 35947 / DSM 3960 / H-6-12).